We begin with the raw amino-acid sequence, 213 residues long: Octanoyltransferase (213 aa).

The BPL/LPL catalytic domain maps to Thr-36–Leu-211. Residues Arg-75–His-82, Ser-142–Gly-144, and Gly-155–Ala-157 each bind substrate. The Acyl-thioester intermediate role is filled by Cys-173.

Belongs to the LipB family.

The protein localises to the cytoplasm. The catalysed reaction is octanoyl-[ACP] + L-lysyl-[protein] = N(6)-octanoyl-L-lysyl-[protein] + holo-[ACP] + H(+). Its pathway is protein modification; protein lipoylation via endogenous pathway; protein N(6)-(lipoyl)lysine from octanoyl-[acyl-carrier-protein]: step 1/2. Its function is as follows. Catalyzes the transfer of endogenously produced octanoic acid from octanoyl-acyl-carrier-protein onto the lipoyl domains of lipoate-dependent enzymes. Lipoyl-ACP can also act as a substrate although octanoyl-ACP is likely to be the physiological substrate. This Photorhabdus laumondii subsp. laumondii (strain DSM 15139 / CIP 105565 / TT01) (Photorhabdus luminescens subsp. laumondii) protein is Octanoyltransferase.